The following is a 69-amino-acid chain: uncharacterized protein (69 aa).

A signal peptide spans 1–21; that stretch reads MNTKFILILLVLIISTIFVNS.

Its subcellular location is the secreted. This is an uncharacterized protein from Dictyostelium discoideum (Social amoeba).